Here is a 271-residue protein sequence, read N- to C-terminus: tRNA pseudouridine synthase A (271 aa).

The active-site Nucleophile is aspartate 54. Tyrosine 112 is a binding site for substrate.

The protein belongs to the tRNA pseudouridine synthase TruA family. In terms of assembly, homodimer.

It catalyses the reaction uridine(38/39/40) in tRNA = pseudouridine(38/39/40) in tRNA. Functionally, formation of pseudouridine at positions 38, 39 and 40 in the anticodon stem and loop of transfer RNAs. The chain is tRNA pseudouridine synthase A from Acinetobacter baylyi (strain ATCC 33305 / BD413 / ADP1).